The following is a 314-amino-acid chain: uncharacterized protein (314 aa).

Disordered stretches follow at residues 170–203 (RSSM…NPDE) and 258–314 (VGES…PKKR). Residues 171 to 186 (SSMNSQSQMSESSFPT) are compositionally biased toward low complexity. Over residues 187-200 (PIDPPPRIPHPPLN) the composition is skewed to pro residues. Polar residues predominate over residues 261–272 (SSRQGENTQNVH). Basic and acidic residues predominate over residues 289-303 (RFKDDARKSNEDEHM).

This is an uncharacterized protein from Arabidopsis thaliana (Mouse-ear cress).